Consider the following 73-residue polypeptide: MFLSSAVRKDSNGVRHLPSVQRWTPGSPPTRAHGHVSYVAQCATAQCREAVGRTYPGVVKKGLENTDKVRGFI.

A disordered region spans residues 1 to 32; the sequence is MFLSSAVRKDSNGVRHLPSVQRWTPGSPPTRA.

This is an uncharacterized protein from Frog virus 3 (isolate Goorha) (FV-3).